The primary structure comprises 464 residues: Flavin-containing monooxygenase FMO GS-OX-like 7 (464 aa).

18–23 contributes to the FAD binding site; that stretch reads GAGAAG. Position 214–219 (214–219) interacts with NADP(+); the sequence is GSSVSG.

Belongs to the FMO family. Requires FAD as cofactor.

In terms of biological role, catalyzes the conversion of methylthioalkyl glucosinolates of any chain length into methylsulfinylalkyl glucosinolates. This is Flavin-containing monooxygenase FMO GS-OX-like 7 from Arabidopsis thaliana (Mouse-ear cress).